We begin with the raw amino-acid sequence, 562 residues long: Solute carrier family 40 member 1 (562 aa).

Over 1-20 (MDSPASKKPRCERFREFFKS) the chain is Cytoplasmic. A helical transmembrane segment spans residues 21 to 50 (AKFLIYVGHALSTWGDRMWNFAVAVFLVEL). Asp-36 contributes to the Fe cation binding site. At 51-54 (YGNS) the chain is on the extracellular side. A helical transmembrane segment spans residues 55-81 (LLLTAVYGLVVAGSVLLLGAIIGDWVD). At 82–84 (KNP) the chain is on the cytoplasmic side. Residues 85-115 (RLKVAQTSLVVQNSAVILCGALLMAVFQFKQ) traverse the membrane as a helical segment. Topologically, residues 116-123 (QLSSMYDG) are extracellular. A helical membrane pass occupies residues 124–159 (WLLTTCYIMVISIANIANLASTAMSITIQRDWVVVV). At 160 to 161 (AG) the chain is on the cytoplasmic side. A helical membrane pass occupies residues 162-192 (DDRSKLADMNATVRIIDQLTNILAPMLVGQI). At 193-199 (MAFGSHF) the chain is on the extracellular side. A helical membrane pass occupies residues 200–226 (IGCGFISGWNLFSMCLEYFLLWKVYQK). Residues 227-300 (TPALAFKAGQ…DGWVAYYNQS (74 aa)) lie on the Cytoplasmic side of the membrane. Residues 301-327 (IFFAGMSLAFLYMTVLGFDCITTGYAY) traverse the membrane as a helical segment. Residue Cys-320 coordinates Fe cation. Over 328–332 (TQGLN) the chain is Extracellular. Residues 333 to 360 (GSVLSLLMGASAVSGICGTVAFTWIRKK) traverse the membrane as a helical segment. Residues 361–362 (CG) are Cytoplasmic-facing. Residues 363 to 385 (LIRTGFIAGVTQLSCLTLCVASV) traverse the membrane as a helical segment. Topologically, residues 386–444 (FAPGSPFDLSVSPFEEVLRHLFGDSGSLRESPTFIPTTEPPIQANVTVFEEAPPVESYM) are extracellular. Residues 445-474 (SVGLLFAGVIAARVGLWSFDLTVTQLIQEN) form a helical membrane-spanning segment. Topologically, residues 475 to 479 (VIESE) are cytoplasmic. The helical transmembrane segment at 480–504 (RGVINGVQNSMNYLLDLLHFIMVIL) threads the bilayer. Residue His-498 participates in Fe cation binding. The Extracellular portion of the chain corresponds to 505–507 (APN). Residues 508–533 (PEAFGLLVIISVSFVAMGHMMYFRFA) form a helical membrane-spanning segment. The Cytoplasmic segment spans residues 534 to 562 (YKSLGSRLFLFCSPEQKPDPNIPSLPNSV).

It belongs to the ferroportin (FP) (TC 2.A.100) family. SLC40A subfamily. In terms of tissue distribution, expressed in the yolk sac and placenta.

The protein resides in the cell membrane. It is found in the basolateral cell membrane. The enzyme catalyses Fe(2+)(in) = Fe(2+)(out). Functionally, transports Fe(2+) from the inside of a cell to the outside of the cell, playing a key role for maintaining systemic iron homeostasis. May be involved in transfer of Fe(2+) between maternal and fetal circulation. The chain is Solute carrier family 40 member 1 (slc40a1) from Danio rerio (Zebrafish).